A 228-amino-acid polypeptide reads, in one-letter code: UPF0758 protein str1465 (228 aa).

The region spanning 103-225 (QIMSSQQVAR…YYSFREERED (123 aa)) is the MPN domain. Residues His-174, His-176, and Asp-187 each coordinate Zn(2+). Residues 174-187 (HNHPSGEAYPSRND) carry the JAMM motif motif.

The protein belongs to the UPF0758 family.

The sequence is that of UPF0758 protein str1465 from Streptococcus thermophilus (strain CNRZ 1066).